We begin with the raw amino-acid sequence, 375 residues long: Pectate lyase C (375 aa).

Positions Met-1–Ala-22 are cleaved as a signal peptide. A disulfide bridge links Cys-94 with Cys-177. Residues Asp-151, Asp-153, Glu-188, and Asp-192 each contribute to the Ca(2+) site. The active site involves Arg-240. The cysteines at positions 351 and 374 are disulfide-linked.

The protein belongs to the polysaccharide lyase 1 family. PLADES subfamily. Requires Ca(2+) as cofactor.

The protein resides in the secreted. The catalysed reaction is Eliminative cleavage of (1-&gt;4)-alpha-D-galacturonan to give oligosaccharides with 4-deoxy-alpha-D-galact-4-enuronosyl groups at their non-reducing ends.. It participates in glycan metabolism; pectin degradation; 2-dehydro-3-deoxy-D-gluconate from pectin: step 2/5. Functionally, involved in maceration and soft-rotting of plant tissue. The protein is Pectate lyase C of Dickeya chrysanthemi (Pectobacterium chrysanthemi).